Here is a 50-residue protein sequence, read N- to C-terminus: Defensin D4 (50 aa).

Intrachain disulfides connect Cys3-Cys50, Cys14-Cys35, Cys20-Cys44, and Cys24-Cys46.

In terms of tissue distribution, detected in seeds (at protein level).

Its subcellular location is the secreted. Antimicrobial peptide with antifungal activity. This chain is Defensin D4, found in Nigella sativa (Black cumin).